We begin with the raw amino-acid sequence, 367 residues long: Histidinol-phosphate aminotransferase (367 aa).

Lysine 227 carries the post-translational modification N6-(pyridoxal phosphate)lysine.

The protein belongs to the class-II pyridoxal-phosphate-dependent aminotransferase family. Histidinol-phosphate aminotransferase subfamily. In terms of assembly, homodimer. It depends on pyridoxal 5'-phosphate as a cofactor.

It catalyses the reaction L-histidinol phosphate + 2-oxoglutarate = 3-(imidazol-4-yl)-2-oxopropyl phosphate + L-glutamate. The protein operates within amino-acid biosynthesis; L-histidine biosynthesis; L-histidine from 5-phospho-alpha-D-ribose 1-diphosphate: step 7/9. This is Histidinol-phosphate aminotransferase from Leptospira borgpetersenii serovar Hardjo-bovis (strain JB197).